The following is a 428-amino-acid chain: Cyclin-B1-1 (428 aa).

It belongs to the cyclin family. Cyclin AB subfamily. As to quaternary structure, interacts with FZR2/CCS52A1, FZR1/CCS52A2 and FZR3/CCS52B. As to expression, expressed in root tip, lateral root apex, shoot apex, leaf primordia, axillary buds, stamen and petal primordia, ovules and developing embryo.

The protein resides in the nucleus. This is Cyclin-B1-1 (CYCB1-1) from Arabidopsis thaliana (Mouse-ear cress).